A 168-amino-acid chain; its full sequence is NADH-ubiquinone oxidoreductase chain 6 (168 aa).

5 helical membrane-spanning segments follow: residues 1–21, 27–47, 50–70, 87–107, and 143–163; these read MKMM…VAFA, IYGG…VVSL, VFLG…VFGY, VVAF…YFMS, and WALA…LEVV.

It belongs to the complex I subunit 6 family. Core subunit of respiratory chain NADH dehydrogenase (Complex I) which is composed of 45 different subunits.

The protein resides in the mitochondrion inner membrane. The catalysed reaction is a ubiquinone + NADH + 5 H(+)(in) = a ubiquinol + NAD(+) + 4 H(+)(out). Its function is as follows. Core subunit of the mitochondrial membrane respiratory chain NADH dehydrogenase (Complex I) which catalyzes electron transfer from NADH through the respiratory chain, using ubiquinone as an electron acceptor. Essential for the catalytic activity and assembly of complex I. This is NADH-ubiquinone oxidoreductase chain 6 (MT-ND6) from Didelphis virginiana (North American opossum).